The chain runs to 422 residues: Phospho-N-acetylmuramoyl-pentapeptide-transferase (422 aa).

9 helical membrane-spanning segments follow: residues 28–48 (LMAV…FINL), 71–91 (VGVP…PCLL), 95–115 (LDNI…SLGF), 136–156 (IIGQ…SPDV), 211–231 (AGWF…SNGA), 239–259 (GMAA…AYVS), 279–299 (LVIY…YNAY), 313–333 (IGGI…IPIL), and 399–419 (KITV…IITL).

It belongs to the glycosyltransferase 4 family. MraY subfamily. It depends on Mg(2+) as a cofactor.

It is found in the cell inner membrane. It carries out the reaction UDP-N-acetyl-alpha-D-muramoyl-L-alanyl-gamma-D-glutamyl-meso-2,6-diaminopimeloyl-D-alanyl-D-alanine + di-trans,octa-cis-undecaprenyl phosphate = di-trans,octa-cis-undecaprenyl diphospho-N-acetyl-alpha-D-muramoyl-L-alanyl-D-glutamyl-meso-2,6-diaminopimeloyl-D-alanyl-D-alanine + UMP. Its pathway is cell wall biogenesis; peptidoglycan biosynthesis. Its function is as follows. Catalyzes the initial step of the lipid cycle reactions in the biosynthesis of the cell wall peptidoglycan: transfers peptidoglycan precursor phospho-MurNAc-pentapeptide from UDP-MurNAc-pentapeptide onto the lipid carrier undecaprenyl phosphate, yielding undecaprenyl-pyrophosphoryl-MurNAc-pentapeptide, known as lipid I. The sequence is that of Phospho-N-acetylmuramoyl-pentapeptide-transferase from Bacteroides thetaiotaomicron (strain ATCC 29148 / DSM 2079 / JCM 5827 / CCUG 10774 / NCTC 10582 / VPI-5482 / E50).